We begin with the raw amino-acid sequence, 317 residues long: tRNA-cytidine(32) 2-sulfurtransferase (317 aa).

The disordered stretch occupies residues 1–29; that stretch reads MNTANNTLPTAADWAGEDGAPDAADTRKI. The short motif at 65-70 is the PP-loop motif element; that stretch reads SGGKDS. C140, C143, and C231 together coordinate [4Fe-4S] cluster.

It belongs to the TtcA family. Homodimer. Mg(2+) serves as cofactor. Requires [4Fe-4S] cluster as cofactor.

The protein resides in the cytoplasm. The enzyme catalyses cytidine(32) in tRNA + S-sulfanyl-L-cysteinyl-[cysteine desulfurase] + AH2 + ATP = 2-thiocytidine(32) in tRNA + L-cysteinyl-[cysteine desulfurase] + A + AMP + diphosphate + H(+). It functions in the pathway tRNA modification. Functionally, catalyzes the ATP-dependent 2-thiolation of cytidine in position 32 of tRNA, to form 2-thiocytidine (s(2)C32). The sulfur atoms are provided by the cysteine/cysteine desulfurase (IscS) system. In Acidovorax ebreus (strain TPSY) (Diaphorobacter sp. (strain TPSY)), this protein is tRNA-cytidine(32) 2-sulfurtransferase.